The sequence spans 155 residues: SsrA-binding protein (155 aa).

The protein belongs to the SmpB family.

The protein resides in the cytoplasm. In terms of biological role, required for rescue of stalled ribosomes mediated by trans-translation. Binds to transfer-messenger RNA (tmRNA), required for stable association of tmRNA with ribosomes. tmRNA and SmpB together mimic tRNA shape, replacing the anticodon stem-loop with SmpB. tmRNA is encoded by the ssrA gene; the 2 termini fold to resemble tRNA(Ala) and it encodes a 'tag peptide', a short internal open reading frame. During trans-translation Ala-aminoacylated tmRNA acts like a tRNA, entering the A-site of stalled ribosomes, displacing the stalled mRNA. The ribosome then switches to translate the ORF on the tmRNA; the nascent peptide is terminated with the 'tag peptide' encoded by the tmRNA and targeted for degradation. The ribosome is freed to recommence translation, which seems to be the essential function of trans-translation. In Geobacillus kaustophilus (strain HTA426), this protein is SsrA-binding protein.